Reading from the N-terminus, the 84-residue chain is Small ribosomal subunit protein eS27z (84 aa).

The C4-type zinc finger occupies 39-61 (CQGCFNITTVFSHSQTVVMCGNC).

The protein belongs to the eukaryotic ribosomal protein eS27 family. (Microbial infection) May interact with Tomato yellow leaf curl virus (TYLCV) and papaya leaf curl China virus (PaLcuCNV) C2 proteins. This interaction prevents activation of Jasmonate signaling, thereby facilitating viral uptake by insects vectors. Zn(2+) is required as a cofactor.

In Arabidopsis thaliana (Mouse-ear cress), this protein is Small ribosomal subunit protein eS27z (RPS27A).